A 200-amino-acid polypeptide reads, in one-letter code: MDFILNISVKMEVIFKTDLRSSSQVVFHAGSLYTWFSIEIINSGRIVTTAIKTLLNTVKYDIVRSARVYAGQGYTEQQAQEEWNMILHVLFEEETESSASLESIHEKNDHEKNDHEIDECTSSFETLFEQEPSSTETPKNAKLYALAQKTVQHIEQYGKAPDFNKIIRAHNFIQTIHGTPLKEEEKEEVRLMVIKLLKKK.

The protein belongs to the asfivirus phosphoprotein p30 family. As to quaternary structure, oligomer. Interacts with host HNRNPK. In terms of processing, phosphorylated on serine residues in the 115 N-terminal amino acids.

The protein resides in the host cytoplasm. The protein localises to the host nucleus. Its subcellular location is the virion. Functionally, modifies the subcellular distribution of heterogeneous nuclear ribonucleoprotein K (HNRNPK) and may contribute to modulate HNRNPK functions related to processing and export of mRNAs during ASFV infection. Necessary for virus internalization. The chain is Phosphoprotein p30 from African swine fever virus (isolate Tick/Malawi/Lil 20-1/1983) (ASFV).